Here is a 203-residue protein sequence, read N- to C-terminus: GTP cyclohydrolase-2 (203 aa).

GTP is bound at residue 49 to 53 (RIHSE). The Zn(2+) site is built by cysteine 54, cysteine 65, and cysteine 67. GTP is bound by residues glutamine 70, 92–94 (EGR), and threonine 114. Aspartate 126 (proton acceptor) is an active-site residue. Arginine 128 functions as the Nucleophile in the catalytic mechanism. GTP contacts are provided by threonine 149 and lysine 154.

Belongs to the GTP cyclohydrolase II family. Requires Zn(2+) as cofactor.

The catalysed reaction is GTP + 4 H2O = 2,5-diamino-6-hydroxy-4-(5-phosphoribosylamino)-pyrimidine + formate + 2 phosphate + 3 H(+). It participates in cofactor biosynthesis; riboflavin biosynthesis; 5-amino-6-(D-ribitylamino)uracil from GTP: step 1/4. Its function is as follows. Catalyzes the conversion of GTP to 2,5-diamino-6-ribosylamino-4(3H)-pyrimidinone 5'-phosphate (DARP), formate and pyrophosphate. In Shewanella sp. (strain MR-7), this protein is GTP cyclohydrolase-2.